The primary structure comprises 177 residues: Acireductone dioxygenase (177 aa).

Fe(2+) contacts are provided by H99, H101, E105, and H143. Positions 99, 101, 105, and 143 each coordinate Ni(2+).

The protein belongs to the acireductone dioxygenase (ARD) family. Monomer. Fe(2+) is required as a cofactor. Ni(2+) serves as cofactor.

The enzyme catalyses 1,2-dihydroxy-5-(methylsulfanyl)pent-1-en-3-one + O2 = 3-(methylsulfanyl)propanoate + CO + formate + 2 H(+). The catalysed reaction is 1,2-dihydroxy-5-(methylsulfanyl)pent-1-en-3-one + O2 = 4-methylsulfanyl-2-oxobutanoate + formate + 2 H(+). Its pathway is amino-acid biosynthesis; L-methionine biosynthesis via salvage pathway; L-methionine from S-methyl-5-thio-alpha-D-ribose 1-phosphate: step 5/6. In terms of biological role, catalyzes 2 different reactions between oxygen and the acireductone 1,2-dihydroxy-3-keto-5-methylthiopentene (DHK-MTPene) depending upon the metal bound in the active site. Fe-containing acireductone dioxygenase (Fe-ARD) produces formate and 2-keto-4-methylthiobutyrate (KMTB), the alpha-ketoacid precursor of methionine in the methionine recycle pathway. Ni-containing acireductone dioxygenase (Ni-ARD) produces methylthiopropionate, carbon monoxide and formate, and does not lie on the methionine recycle pathway. In Leptospira borgpetersenii serovar Hardjo-bovis (strain L550), this protein is Acireductone dioxygenase.